The following is a 136-amino-acid chain: UPF0225 protein Pnap_0466 (136 aa).

Belongs to the UPF0225 family.

In Polaromonas naphthalenivorans (strain CJ2), this protein is UPF0225 protein Pnap_0466.